A 121-amino-acid chain; its full sequence is Large ribosomal subunit protein bL12 (121 aa).

It belongs to the bacterial ribosomal protein bL12 family. Homodimer. Part of the ribosomal stalk of the 50S ribosomal subunit. Forms a multimeric L10(L12)X complex, where L10 forms an elongated spine to which 2 to 4 L12 dimers bind in a sequential fashion. Binds GTP-bound translation factors.

Functionally, forms part of the ribosomal stalk which helps the ribosome interact with GTP-bound translation factors. Is thus essential for accurate translation. The sequence is that of Large ribosomal subunit protein bL12 from Pseudomonas savastanoi pv. phaseolicola (strain 1448A / Race 6) (Pseudomonas syringae pv. phaseolicola (strain 1448A / Race 6)).